The primary structure comprises 494 residues: ATP synthase subunit beta, plastid (494 aa).

169–176 (GGAGVGKT) is a binding site for ATP.

The protein belongs to the ATPase alpha/beta chains family. F-type ATPases have 2 components, CF(1) - the catalytic core - and CF(0) - the membrane proton channel. CF(1) has five subunits: alpha(3), beta(3), gamma(1), delta(1), epsilon(1). CF(0) has four main subunits: a(1), b(1), b'(1) and c(9-12).

It localises to the plastid membrane. It carries out the reaction ATP + H2O + 4 H(+)(in) = ADP + phosphate + 5 H(+)(out). Its function is as follows. Produces ATP from ADP in the presence of a proton gradient across the membrane. The catalytic sites are hosted primarily by the beta subunits. This chain is ATP synthase subunit beta, plastid (atpB), found in Cuscuta sandwichiana (Kauna'oa).